The chain runs to 433 residues: Phosphoglycerate kinase, chloroplastic (433 aa).

The N-terminal 28 residues, 1–28 (GASFSLHVLSKINSYKSQSTKPIRGVAS), are a transit peptide targeting the chloroplast. Alanine 51, aspartate 52, asparagine 54, arginine 68, serine 90, histidine 91, glycine 93, arginine 94, arginine 149, histidine 181, and arginine 182 together coordinate (2R)-3-phosphoglycerate. Glycine 227 contacts ADP. Residue glycine 227 participates in CDP binding. Residues lysine 229 and lysine 233 each coordinate AMP. Lysine 233 serves as a coordination point for ATP. Glycine 251 serves as a coordination point for ADP. Glycine 251 lines the CDP pocket. AMP-binding residues include glycine 252 and glycine 324. Residues glycine 252 and glycine 324 each contribute to the ATP site. The CDP site is built by glycine 349 and phenylalanine 354. Residue phenylalanine 354 coordinates ADP. Glutamate 355 serves as a coordination point for AMP. Positions 355, 386, and 387 each coordinate ATP. Position 386 (aspartate 386) interacts with Mg(2+).

This sequence belongs to the phosphoglycerate kinase family. As to quaternary structure, monomer. Requires Mg(2+) as cofactor.

It localises to the plastid. The protein localises to the chloroplast. The catalysed reaction is (2R)-3-phosphoglycerate + ATP = (2R)-3-phospho-glyceroyl phosphate + ADP. Its pathway is carbohydrate biosynthesis; Calvin cycle. The protein is Phosphoglycerate kinase, chloroplastic of Spinacia oleracea (Spinach).